A 360-amino-acid polypeptide reads, in one-letter code: Protein Wnt-2 (360 aa).

A signal peptide spans 1–25 (MNAPLGGIWLWLPLLLTWLTPEVNS). Cystine bridges form between Cys-76/Cys-87, Cys-127/Cys-135, Cys-137/Cys-157, Cys-206/Cys-220, Cys-208/Cys-215, Cys-278/Cys-309, Cys-294/Cys-304, Cys-308/Cys-348, Cys-324/Cys-339, Cys-326/Cys-336, and Cys-331/Cys-332. Ser-212 is lipidated: O-palmitoleoyl serine; by PORCN. An N-linked (GlcNAc...) asparagine glycan is attached at Asn-295.

This sequence belongs to the Wnt family. In terms of processing, palmitoleoylation is required for efficient binding to frizzled receptors. Depalmitoleoylation leads to Wnt signaling pathway inhibition.

Its subcellular location is the secreted. It is found in the extracellular space. The protein localises to the extracellular matrix. Ligand for members of the frizzled family of seven transmembrane receptors. Functions in the canonical Wnt signaling pathway that results in activation of transcription factors of the TCF/LEF family. Functions as a upstream regulator of FGF10 expression. Plays an important role in embryonic lung development. May contribute to embryonic brain development by regulating the proliferation of dopaminergic precursors and neurons. The protein is Protein Wnt-2 (WNT2) of Nomascus leucogenys (Northern white-cheeked gibbon).